The primary structure comprises 1764 residues: Cilia- and flagella-associated protein 44 (1764 aa).

WD repeat units lie at residues 115-157 (GTER…IVLR), 160-199 (AFSQ…TGLK), 208-248 (GNVE…VVLT), 255-294 (CHDG…DAEP), 361-400 (HPAG…VLAE), 454-493 (AHKG…QPGT), and 495-534 (VPGM…GVLL). Positions 570-654 (QLVVPKPKRP…GGPSSTTGEL (85 aa)) are disordered. Positions 575 to 584 (KPKRPKKKKG) are enriched in basic residues. 2 stretches are compositionally biased toward basic and acidic residues: residues 585-596 (KNDGEEGDKEGG) and 604-628 (GEDK…GRAA). Residues 629–641 (EEEEEEEADDEAD) are compositionally biased toward acidic residues. WD repeat units lie at residues 649 to 692 (STTG…PLAA), 707 to 752 (AHAG…LHDM), and 753 to 791 (QSGR…ELAP). Residues 821–850 (YTLEEEKQQAERDQQVREAEEKKLSVRQRL) adopt a coiled-coil conformation. Disordered stretches follow at residues 972–1003 (AAAG…GDAA) and 1426–1468 (KKKA…CPPG). Residues 1434–1462 (GEDDYDSEEDEEDEDMGDDEVDDDDDGGE) show a composition bias toward acidic residues. 3 coiled-coil regions span residues 1479 to 1517 (DLRE…LVEQ), 1567 to 1674 (LVFS…DAKI), and 1729 to 1758 (EERD…LRRK).

The protein belongs to the CFAP44 family.

The protein localises to the cell projection. It is found in the cilium. The protein resides in the flagellum. It localises to the cytoplasm. Its subcellular location is the cytoskeleton. The protein localises to the flagellum axoneme. Flagellar protein involved in sperm flagellum axoneme organization and function. The chain is Cilia- and flagella-associated protein 44 from Chlamydomonas reinhardtii (Chlamydomonas smithii).